Reading from the N-terminus, the 338-residue chain is Anthranilate phosphoribosyltransferase (338 aa).

Residues Gly81, 84–85 (GD), Ser89, 91–94 (NVST), 109–117 (KHGNRALSS), and Ala121 contribute to the 5-phospho-alpha-D-ribose 1-diphosphate site. Anthranilate is bound at residue Gly81. Mg(2+) is bound at residue Ser93. Asn112 contributes to the anthranilate binding site. Arg167 is an anthranilate binding site. Positions 226 and 227 each coordinate Mg(2+).

The protein belongs to the anthranilate phosphoribosyltransferase family. In terms of assembly, homodimer. Mg(2+) is required as a cofactor.

The catalysed reaction is N-(5-phospho-beta-D-ribosyl)anthranilate + diphosphate = 5-phospho-alpha-D-ribose 1-diphosphate + anthranilate. It participates in amino-acid biosynthesis; L-tryptophan biosynthesis; L-tryptophan from chorismate: step 2/5. Catalyzes the transfer of the phosphoribosyl group of 5-phosphorylribose-1-pyrophosphate (PRPP) to anthranilate to yield N-(5'-phosphoribosyl)-anthranilate (PRA). This Rhodopseudomonas palustris (strain ATCC BAA-98 / CGA009) protein is Anthranilate phosphoribosyltransferase.